Consider the following 426-residue polypeptide: Serine hydroxymethyltransferase 1 (426 aa).

(6S)-5,6,7,8-tetrahydrofolate is bound by residues L118 and 122–124 (GHL). K227 is subject to N6-(pyridoxal phosphate)lysine.

This sequence belongs to the SHMT family. As to quaternary structure, homodimer. Pyridoxal 5'-phosphate serves as cofactor.

It is found in the cytoplasm. The enzyme catalyses (6R)-5,10-methylene-5,6,7,8-tetrahydrofolate + glycine + H2O = (6S)-5,6,7,8-tetrahydrofolate + L-serine. The protein operates within one-carbon metabolism; tetrahydrofolate interconversion. It participates in amino-acid biosynthesis; glycine biosynthesis; glycine from L-serine: step 1/1. In terms of biological role, catalyzes the reversible interconversion of serine and glycine with tetrahydrofolate (THF) serving as the one-carbon carrier. This reaction serves as the major source of one-carbon groups required for the biosynthesis of purines, thymidylate, methionine, and other important biomolecules. Also exhibits THF-independent aldolase activity toward beta-hydroxyamino acids, producing glycine and aldehydes, via a retro-aldol mechanism. The sequence is that of Serine hydroxymethyltransferase 1 from Mycobacterium bovis (strain ATCC BAA-935 / AF2122/97).